We begin with the raw amino-acid sequence, 714 residues long: EtfAB:quinone oxidoreductase (714 aa).

6 helical membrane-spanning segments follow: residues 25–45, 87–107, 125–145, 164–184, 207–227, and 236–256; these read YEWL…FGFW, AGWM…AAGI, IGFS…VMVL, DGWI…IEGL, PFGW…MLMW, and MAIA…HIFA. 4Fe-4S ferredoxin-type domains are found at residues 293 to 324 and 375 to 405; these read WKDL…LNPK and YDVV…HIPK. Cys302, Cys305, Cys308, Cys312, Cys386, Cys389, Cys392, and Cys396 together coordinate [4Fe-4S] cluster.

Might constitute a membrane-associated complex with EtfA (Swol_0697), EtfB (Swol_0696), and the butyryl-CoA dehydrogenase Swol_1933 and/or Swol_2052. Requires [4Fe-4S] cluster as cofactor.

Its subcellular location is the cell membrane. Its pathway is lipid metabolism; butanoate metabolism. Functionally, oxidoreductase involved in syntrophic growth of S.wolfei with butyrate. Is presumed to link the electron flow from butyryl-CoA dehydrogenases to the membrane, in conjunction with the electron transfer flavoprotein EtfAB. May transfer electrons to the menaquinone pool of the membrane. This chain is EtfAB:quinone oxidoreductase, found in Syntrophomonas wolfei subsp. wolfei (strain DSM 2245B / Goettingen).